Consider the following 314-residue polypeptide: Fibrinogen-like protein 1 (314 aa).

An N-terminal signal peptide occupies residues M1–V22. Residues C28–V62 are a coiled coil. Residues L76–D308 form the Fibrinogen C-terminal domain. 2 cysteine pairs are disulfide-bonded: C85–C114 and C250–C263.

As to quaternary structure, homodimer. Interacts (via the Fibrinogen C-terminal domain) with LAG3 (via Ig-like domains 1 and 2).

Its subcellular location is the secreted. Functionally, immune suppressive molecule that inhibits antigen-specific T-cell activation by acting as a major ligand of LAG3. Responsible for LAG3 T-cell inhibitory function. Binds LAG3 independently from MHC class II (MHC-II). Secreted by, and promotes growth of, hepatocytes. This Rattus norvegicus (Rat) protein is Fibrinogen-like protein 1.